The chain runs to 175 residues: Dof zinc finger protein DOF1.5 (175 aa).

A disordered region spans residues 29–57 (EEQQQQQQPELQATTAVRSPSSDLTAEKR). Polar residues predominate over residues 37–52 (PELQATTAVRSPSSDL). A Dof-type zinc finger spans residues 62 to 116 (IPCPRCKSMETKFCYFNNYNVNQPRHFCKGCQRYWTAGGALRNVPVGAGRRKSKP). Zn(2+)-binding residues include Cys-64, Cys-67, Cys-89, and Cys-92. Positions 162-168 (PVKRLRC) match the Nuclear localization signal motif.

The protein localises to the nucleus. Functionally, transcription factor that binds specifically to a 5'-AA[AG]G-3' consensus core sequence. Acts as a negative regulator in the phytochrome-mediated light responses. Controls phyB-mediated end-of-day response and the phyA-mediated anthocyanin accumulation. Not involved in direct flowering time regulation. This is Dof zinc finger protein DOF1.5 (DOF1.5) from Arabidopsis thaliana (Mouse-ear cress).